A 365-amino-acid polypeptide reads, in one-letter code: DNA replication and repair protein RecF (365 aa).

Position 30–37 (30–37 (GDNAQGKT)) interacts with ATP.

It belongs to the RecF family.

The protein localises to the cytoplasm. In terms of biological role, the RecF protein is involved in DNA metabolism; it is required for DNA replication and normal SOS inducibility. RecF binds preferentially to single-stranded, linear DNA. It also seems to bind ATP. This Alkaliphilus oremlandii (strain OhILAs) (Clostridium oremlandii (strain OhILAs)) protein is DNA replication and repair protein RecF.